Reading from the N-terminus, the 439-residue chain is Kelch domain-containing protein 10 (439 aa).

Positions 1–50 are disordered; sequence MSAAQGWDRNRRRGGGAAGGASGVSGAGAAGGGRGTGQLNRFVQLSGRPH. Arg13 is modified (omega-N-methylarginine). The span at 15–36 shows a compositional bias: gly residues; it reads GGAAGGASGVSGAGAAGGGRGT. 6 Kelch repeats span residues 87-154, 155-198, 199-260, 261-319, 320-364, and 365-403; these read PARS…LASM, SLVL…SCRG, KRPS…RYRH, EIAH…HSCV, QIKN…VYFH, and CAAV…PSLL. The interaction with CUL2 stretch occupies residues 398-439; sequence VVPSLLELAWEKLLAAFPNLANLSRTQLLHLGLTQELIERLK.

This sequence belongs to the KLHDC10 family. As to quaternary structure, component of a CRL2 E3 ubiquitin-protein ligase complex, also named ECS (Elongin BC-CUL2/5-SOCS-box protein) complex, composed of CUL2, Elongin BC (ELOB and ELOC), RBX1 and substrate-specific adapter KLHDC10. Interacts (via the 6 Kelch repeats) with PPP5C.

Its subcellular location is the nucleus. It is found in the cytoplasm. It participates in protein modification; protein ubiquitination. Its function is as follows. Substrate-recognition component of a Cul2-RING (CRL2) E3 ubiquitin-protein ligase complex of the DesCEND (destruction via C-end degrons) pathway, which recognizes a C-degron located at the extreme C-terminus of target proteins, leading to their ubiquitination and degradation. The C-degron recognized by the DesCEND pathway is usually a motif of less than ten residues and can be present in full-length proteins, truncated proteins or proteolytically cleaved forms. The CRL2(KLHDC10) complex specifically recognizes proteins with a proline-glycine (Pro-Gly) or an alanine tail (CAT tail) at the C-terminus, leading to their ubiquitination and degradation. The CRL2(KLHDC10) complex is involved in the ribosome-associated quality control (RQC) pathway, which mediates the extraction of incompletely synthesized nascent chains from stalled ribosomes: CRL2(KLHDC10) acts downstream of NEMF and recognizes CAT tails associated with stalled nascent chains, leading to their ubiquitination and degradation. Participates in the oxidative stress-induced cell death through MAP3K5 activation. Inhibits PPP5C phosphatase activity on MAP3K5. Acts as a regulator of necroptosis. The protein is Kelch domain-containing protein 10 of Mus musculus (Mouse).